Here is a 61-residue protein sequence, read N- to C-terminus: Small ribosomal subunit protein uS14 (61 aa).

Zn(2+) is bound by residues Cys24, Cys27, Cys40, and Cys43.

Belongs to the universal ribosomal protein uS14 family. Zinc-binding uS14 subfamily. In terms of assembly, part of the 30S ribosomal subunit. Contacts proteins S3 and S10. Requires Zn(2+) as cofactor.

In terms of biological role, binds 16S rRNA, required for the assembly of 30S particles and may also be responsible for determining the conformation of the 16S rRNA at the A site. The sequence is that of Small ribosomal subunit protein uS14 from Dictyoglomus turgidum (strain DSM 6724 / Z-1310).